The primary structure comprises 456 residues: tRNA modification GTPase MnmE (456 aa).

Residues Arg-23, Glu-85, and Arg-124 each contribute to the (6S)-5-formyl-5,6,7,8-tetrahydrofolate site. The region spanning 220-375 is the TrmE-type G domain; sequence GLRVLIFGKP…LVSAIQERFV (156 aa). Asn-230 is a K(+) binding site. GTP is bound by residues 230 to 235, 249 to 255, and 274 to 277; these read NVGKSS, TDIPGTT, and DTAG. Residue Ser-234 participates in Mg(2+) binding. Residues Thr-249, Ile-251, and Thr-254 each coordinate K(+). Thr-255 serves as a coordination point for Mg(2+). Lys-456 is a binding site for (6S)-5-formyl-5,6,7,8-tetrahydrofolate.

It belongs to the TRAFAC class TrmE-Era-EngA-EngB-Septin-like GTPase superfamily. TrmE GTPase family. Homodimer. Heterotetramer of two MnmE and two MnmG subunits. K(+) is required as a cofactor.

The protein localises to the cytoplasm. In terms of biological role, exhibits a very high intrinsic GTPase hydrolysis rate. Involved in the addition of a carboxymethylaminomethyl (cmnm) group at the wobble position (U34) of certain tRNAs, forming tRNA-cmnm(5)s(2)U34. The protein is tRNA modification GTPase MnmE of Syntrophotalea carbinolica (strain DSM 2380 / NBRC 103641 / GraBd1) (Pelobacter carbinolicus).